The sequence spans 462 residues: cAMP-dependent protein kinase regulatory subunit (462 aa).

The tract at residues 54-203 (TPSPRFPPSP…RLKYAIEGNF (150 aa)) is dimerization and phosphorylation. Positions 79-157 (FGANANPFGG…PTTDSYPAQY (79 aa)) are disordered. Low complexity predominate over residues 80 to 102 (GANANPFGGSSSNPNPFGGSASP). Ser-164 carries the phosphoserine modification. 3',5'-cyclic AMP-binding positions include 204 to 333 (LFSH…FLEE), Glu-282, Arg-291, 336 to 453 (ILSS…KTGV), Glu-401, and Arg-410.

It belongs to the cAMP-dependent kinase regulatory chain family. Tetramer, composed of 2 regulatory (R) and 2 catalytic (C) subunits. In the presence of cAMP it dissociates into 2 active monomeric C subunits and an R dimer.

This Hypocrea atroviridis (Trichoderma atroviride) protein is cAMP-dependent protein kinase regulatory subunit (pkar1).